Here is a 299-residue protein sequence, read N- to C-terminus: tRNA pseudouridine synthase B (299 aa).

Asp38 (nucleophile) is an active-site residue.

Belongs to the pseudouridine synthase TruB family. Type 1 subfamily.

The enzyme catalyses uridine(55) in tRNA = pseudouridine(55) in tRNA. Its function is as follows. Responsible for synthesis of pseudouridine from uracil-55 in the psi GC loop of transfer RNAs. In Alkaliphilus oremlandii (strain OhILAs) (Clostridium oremlandii (strain OhILAs)), this protein is tRNA pseudouridine synthase B.